A 579-amino-acid chain; its full sequence is Plastidial pyruvate kinase 2 (579 aa).

The transit peptide at 1-63 (MAQVVATRSI…SRRVVDTTVR (63 aa)) directs the protein to the chloroplast. Residues 6-24 (ATRSIQGSMLSPNGGSVST) are compositionally biased toward polar residues. Positions 6-26 (ATRSIQGSMLSPNGGSVSTRS) are disordered. R140 contributes to the substrate binding site. K(+) is bound by residues N142, S144, D175, and T176. 142 to 145 (NMSH) contacts ATP. R182 is a binding site for ATP. K325 provides a ligand contact to substrate. A Mg(2+)-binding site is contributed by E327. Substrate is bound by residues G350, D351, and T383. D351 contributes to the Mg(2+) binding site.

Belongs to the pyruvate kinase family. As to quaternary structure, oligomer of alpha and beta subunits. It depends on Mg(2+) as a cofactor. K(+) serves as cofactor. As to expression, mostly expressed in seeds, and, to a lower extent, in roots, leaves (veins and trichomes), inflorescences, siliques, pollen (grains and tubes) and flowers (sepals and petals).

The protein localises to the plastid. It localises to the chloroplast stroma. Its subcellular location is the mitochondrion. The catalysed reaction is pyruvate + ATP = phosphoenolpyruvate + ADP + H(+). Its pathway is carbohydrate degradation; glycolysis; pyruvate from D-glyceraldehyde 3-phosphate: step 5/5. Functionally, required for plastidial pyruvate kinase activity. Involved in seed oil accumulation, embryo development and seed storage compounds mobilization upon germination. This is Plastidial pyruvate kinase 2 (PKP2) from Arabidopsis thaliana (Mouse-ear cress).